A 323-amino-acid polypeptide reads, in one-letter code: Large ribosomal subunit protein uL10 (323 aa).

Positions 298-323 (AAAAPAAAAEPEEEDDDDDFGMGALF) are disordered. Residues 307–317 (EPEEEDDDDDF) are compositionally biased toward acidic residues.

It belongs to the universal ribosomal protein uL10 family. In terms of assembly, P0 forms a pentameric complex by interaction with dimers of P1 and P2. Post-translationally, phosphorylated.

In terms of biological role, ribosomal protein P0 is the functional equivalent of E.coli protein L10. This chain is Large ribosomal subunit protein uL10, found in Trypanosoma cruzi.